The following is a 513-amino-acid chain: Putative GMP synthase [glutamine-hydrolyzing] (513 aa).

The Glutamine amidotransferase type-1 domain occupies 8-198 (MIVVLDFGGQ…AFAVCGCEGN (191 aa)). C85 acts as the Nucleophile in catalysis. Residue E174 is part of the active site. In terms of domain architecture, GMPS ATP-PPase spans 199 to 388 (WSMENFIELE…LGIPDEVVWR (190 aa)). ATP is bound at residue 226-232 (SGGVDSS).

In terms of assembly, homodimer.

The enzyme catalyses XMP + L-glutamine + ATP + H2O = GMP + L-glutamate + AMP + diphosphate + 2 H(+). It functions in the pathway purine metabolism; GMP biosynthesis; GMP from XMP (L-Gln route): step 1/1. In terms of biological role, catalyzes the synthesis of GMP from XMP. This chain is Putative GMP synthase [glutamine-hydrolyzing] (guaA), found in Halalkalibacterium halodurans (strain ATCC BAA-125 / DSM 18197 / FERM 7344 / JCM 9153 / C-125) (Bacillus halodurans).